The sequence spans 223 residues: UPF0173 metal-dependent hydrolase THA_544 (223 aa).

It belongs to the UPF0173 family.

The chain is UPF0173 metal-dependent hydrolase THA_544 from Thermosipho africanus (strain TCF52B).